Here is a 78-residue protein sequence, read N- to C-terminus: Large ribosomal subunit protein bL28 (78 aa).

The interval 1 to 28 (MSRRCQVRGTKPEFGNNVSHSQRHTKRR) is disordered.

The protein belongs to the bacterial ribosomal protein bL28 family.

This chain is Large ribosomal subunit protein bL28, found in Cutibacterium acnes (strain DSM 16379 / KPA171202) (Propionibacterium acnes).